A 357-amino-acid chain; its full sequence is Neutral protease 2 homolog UREG_02006 (357 aa).

A signal peptide spans 1–19; the sequence is MLFSSRFLALAALLGQALA. Residues 20–179 constitute a propeptide that is removed on maturation; sequence LPIDDFSQSD…QSAVPTIEKR (160 aa). 2 disulfide bridges follow: cysteine 187–cysteine 259 and cysteine 266–cysteine 284. Histidine 308 is a binding site for Zn(2+). Glutamate 309 is an active-site residue. Zn(2+) is bound by residues histidine 312 and aspartate 323.

Belongs to the peptidase M35 family. Requires Zn(2+) as cofactor.

It localises to the secreted. It carries out the reaction Preferential cleavage of bonds with hydrophobic residues in P1'. Also 3-Asn-|-Gln-4 and 8-Gly-|-Ser-9 bonds in insulin B chain.. Secreted metalloproteinase that allows assimilation of proteinaceous substrates. Shows high activities on basic nuclear substrates such as histone and protamine. This is Neutral protease 2 homolog UREG_02006 from Uncinocarpus reesii (strain UAMH 1704).